A 254-amino-acid chain; its full sequence is NAD-dependent protein deacylase 2 (254 aa).

The 254-residue stretch at 1–254 folds into the Deacetylase sirtuin-type domain; it reads MDEHSIMQAV…LPALVRRLGV (254 aa). Residue 24 to 44 participates in NAD(+) binding; it reads GAGMSADSGLETYRDPETGVW. The substrate site is built by Tyr-69 and Arg-72. 105-108 serves as a coordination point for NAD(+); the sequence is QNID. The active-site Proton acceptor is His-123. The Zn(2+) site is built by Cys-131, Cys-134, Cys-157, and Cys-160. Residues 197–199 and Ala-241 each bind NAD(+); that span reads GTS.

The protein belongs to the sirtuin family. Class III subfamily. Requires Zn(2+) as cofactor.

It localises to the cytoplasm. The enzyme catalyses N(6)-acetyl-L-lysyl-[protein] + NAD(+) + H2O = 2''-O-acetyl-ADP-D-ribose + nicotinamide + L-lysyl-[protein]. It catalyses the reaction N(6)-succinyl-L-lysyl-[protein] + NAD(+) + H2O = 2''-O-succinyl-ADP-D-ribose + nicotinamide + L-lysyl-[protein]. Functionally, NAD-dependent lysine deacetylase and desuccinylase that specifically removes acetyl and succinyl groups on target proteins. Modulates the activities of several proteins which are inactive in their acylated form. This chain is NAD-dependent protein deacylase 2, found in Corynebacterium efficiens (strain DSM 44549 / YS-314 / AJ 12310 / JCM 11189 / NBRC 100395).